A 440-amino-acid polypeptide reads, in one-letter code: C4-dicarboxylate TRAP transporter large permease protein DctM (440 aa).

A run of 13 helical transmembrane segments spans residues 4 to 24 (LIIF…SISL), 54 to 74 (FEIM…HGGV), 89 to 109 (WHGG…AVSG), 112 to 132 (PATV…QGFP), 148 to 168 (ILIP…GMVV), 181 to 201 (VGEL…FLAF), 230 to 250 (AAWG…GIFT), 255 to 275 (AAMS…DLTL), 291 to 311 (MLLY…HEGI), 318 to 338 (WMVN…ILLL), 349 to 369 (IVLI…IDPV), 370 to 390 (HFGI…PVGL), and 410 to 430 (VWPW…VPAI).

The protein belongs to the TRAP transporter large permease family. In terms of assembly, the complex comprises the extracytoplasmic solute receptor protein DctP, and the two transmembrane proteins DctQ and DctM.

It localises to the cell inner membrane. In terms of biological role, part of the tripartite ATP-independent periplasmic (TRAP) transport system DctPQM involved in C4-dicarboxylates uptake. This Rhodobacter capsulatus (Rhodopseudomonas capsulata) protein is C4-dicarboxylate TRAP transporter large permease protein DctM.